Here is a 178-residue protein sequence, read N- to C-terminus: Histone deacetylase complex subunit SAP30L (178 aa).

2 cysteine pairs are disulfide-bonded: Cys-24-Cys-25 and Cys-33-Cys-69. Residues 24 to 72 (CCLIEDAERCGRPAGNASFSKRIQKSISQRKLKLDIDKSVRHLYICDFH) form an Atypical zinc finger. Residues 80–99 (RNKRKRKTSDDGGESPDHEV) are disordered. The Nuclear localization signal (NLS) motif lies at 81 to 86 (NKRKRK). The important for DNA and phosphoinositide binding stretch occupies residues 83–85 (RKR).

It belongs to the SAP30 family. As to quaternary structure, interacts with components of the histone deacetylase complex sin3a, hdac1 and hdac2. Binds histones and nucleosomes. In terms of tissue distribution, detected in embryos at 2dpf (at protein level). Widely expressed during embryogenesis and in adults.

It is found in the nucleus. The protein localises to the nucleolus. Functionally, functions as a transcription repressor, probably via its interaction with histone deacetylase complexes. Required for normal expression of numerous target genes. Involved in the functional recruitment of the class 1 Sin3-histone deacetylase complex (HDAC) to the nucleolus. Binds DNA, apparently without sequence-specificity, and bends bound double-stranded DNA. Binds phosphoinositol phosphates (phosphoinositol 3-phosphate, phosphoinositol 4-phosphate and phosphoinositol 5-phosphate) via the same basic sequence motif that mediates DNA binding and nuclear import. This chain is Histone deacetylase complex subunit SAP30L (sap30l), found in Danio rerio (Zebrafish).